The following is a 130-amino-acid chain: Small ribosomal subunit protein uS11 (130 aa).

The protein belongs to the universal ribosomal protein uS11 family. Part of the 30S ribosomal subunit. Interacts with proteins S7 and S18. Binds to IF-3.

Its function is as follows. Located on the platform of the 30S subunit, it bridges several disparate RNA helices of the 16S rRNA. Forms part of the Shine-Dalgarno cleft in the 70S ribosome. This is Small ribosomal subunit protein uS11 from Caldanaerobacter subterraneus subsp. tengcongensis (strain DSM 15242 / JCM 11007 / NBRC 100824 / MB4) (Thermoanaerobacter tengcongensis).